Reading from the N-terminus, the 102-residue chain is NADH-quinone oxidoreductase subunit K 1 (102 aa).

The next 3 membrane-spanning stretches (helical) occupy residues 3–23, 29–49, and 62–82; these read TLTT…LGIL, VGML…FMAF, and IIAL…LSII.

This sequence belongs to the complex I subunit 4L family. In terms of assembly, NDH-1 is composed of 14 different subunits. Subunits NuoA, H, J, K, L, M, N constitute the membrane sector of the complex.

The protein localises to the cell inner membrane. The enzyme catalyses a quinone + NADH + 5 H(+)(in) = a quinol + NAD(+) + 4 H(+)(out). NDH-1 shuttles electrons from NADH, via FMN and iron-sulfur (Fe-S) centers, to quinones in the respiratory chain. The immediate electron acceptor for the enzyme in this species is believed to be ubiquinone. Couples the redox reaction to proton translocation (for every two electrons transferred, four hydrogen ions are translocated across the cytoplasmic membrane), and thus conserves the redox energy in a proton gradient. The protein is NADH-quinone oxidoreductase subunit K 1 of Syntrophobacter fumaroxidans (strain DSM 10017 / MPOB).